The chain runs to 156 residues: Putative pre-16S rRNA nuclease (156 aa).

The protein belongs to the YqgF nuclease family.

It localises to the cytoplasm. In terms of biological role, could be a nuclease involved in processing of the 5'-end of pre-16S rRNA. This chain is Putative pre-16S rRNA nuclease, found in Streptomyces avermitilis (strain ATCC 31267 / DSM 46492 / JCM 5070 / NBRC 14893 / NCIMB 12804 / NRRL 8165 / MA-4680).